An 876-amino-acid chain; its full sequence is Phosphoenolpyruvate carboxylase (876 aa).

Catalysis depends on residues H138 and K543.

The protein belongs to the PEPCase type 1 family. Mg(2+) is required as a cofactor.

The catalysed reaction is oxaloacetate + phosphate = phosphoenolpyruvate + hydrogencarbonate. In terms of biological role, forms oxaloacetate, a four-carbon dicarboxylic acid source for the tricarboxylic acid cycle. This is Phosphoenolpyruvate carboxylase from Pseudomonas fluorescens (strain ATCC BAA-477 / NRRL B-23932 / Pf-5).